The following is a 471-amino-acid chain: MTDLPDSTRWQLWIVAFGFFMQSLDTTIVNTALPSMAQSLGESPLHMHMVIVSYVLTVAVMLPASGWLADKVGVRNIFFTAIVLFTLGSLFCALSGTLNELLLARALQGVGGAMMVPVGRLTVMKIVPREQYMAAMTFVTLPGQVGPLLGPALGGLLVEYASWHWIFLINIPVGIIGAIATLMLMPNYTMQTRRFDLSGFLLLAVGMAVLTLALDGSKGTGLSPLTIDGLVAVGVVALVLYLLHARNNNRALFSLKLFRTRTFSLGLAGSFAGRIGSGMLPFMTPVFLQIGLGFSPFHAGLMMIPMVLGSMGMKRIVVQVVNRFGYRRVLVATTLGLSLVTLLFMTTALLGWYYVLPFVLFLQGMVNSTRFSSMNTLTLKDLPDNLASSGNSLLSMIMQLSMSIGVTIAGLLLGLFGSQHVSIDSGTTQTVFMYTWLSMALIIALPAFIFARVPNDTHQNVAISRRKRSAQ.

Residues 1-11 (MTDLPDSTRWQ) are Periplasmic-facing. A helical transmembrane segment spans residues 12 to 32 (LWIVAFGFFMQSLDTTIVNTA). Residues 33–48 (LPSMAQSLGESPLHMH) are Cytoplasmic-facing. A helical membrane pass occupies residues 49 to 69 (MVIVSYVLTVAVMLPASGWLA). Over 70–76 (DKVGVRN) the chain is Periplasmic. Residues 77 to 97 (IFFTAIVLFTLGSLFCALSGT) form a helical membrane-spanning segment. Over 98-101 (LNEL) the chain is Cytoplasmic. The chain crosses the membrane as a helical span at residues 102–124 (LLARALQGVGGAMMVPVGRLTVM). Residues 125–137 (KIVPREQYMAAMT) lie on the Periplasmic side of the membrane. Residues 138-158 (FVTLPGQVGPLLGPALGGLLV) form a helical membrane-spanning segment. Residues 159-164 (EYASWH) lie on the Cytoplasmic side of the membrane. A helical transmembrane segment spans residues 165 to 185 (WIFLINIPVGIIGAIATLMLM). At 186-196 (PNYTMQTRRFD) the chain is on the periplasmic side. The helical transmembrane segment at 197 to 217 (LSGFLLLAVGMAVLTLALDGS) threads the bilayer. Residues 218–224 (KGTGLSP) are Cytoplasmic-facing. The chain crosses the membrane as a helical span at residues 225-245 (LTIDGLVAVGVVALVLYLLHA). Over 246–262 (RNNNRALFSLKLFRTRT) the chain is Periplasmic. Residues 263–283 (FSLGLAGSFAGRIGSGMLPFM) traverse the membrane as a helical segment. Residues 284–285 (TP) lie on the Cytoplasmic side of the membrane. Residues 286–306 (VFLQIGLGFSPFHAGLMMIPM) form a helical membrane-spanning segment. The Periplasmic segment spans residues 307 to 341 (VLGSMGMKRIVVQVVNRFGYRRVLVATTLGLSLVT). The helical transmembrane segment at 342-362 (LLFMTTALLGWYYVLPFVLFL) threads the bilayer. At 363 to 395 (QGMVNSTRFSSMNTLTLKDLPDNLASSGNSLLS) the chain is on the cytoplasmic side. A helical transmembrane segment spans residues 396 to 416 (MIMQLSMSIGVTIAGLLLGLF). At 417 to 430 (GSQHVSIDSGTTQT) the chain is on the periplasmic side. Residues 431 to 451 (VFMYTWLSMALIIALPAFIFA) form a helical membrane-spanning segment. Residues 452 to 471 (RVPNDTHQNVAISRRKRSAQ) lie on the Cytoplasmic side of the membrane.

The protein belongs to the major facilitator superfamily. TCR/Tet family.

It is found in the cell inner membrane. The sequence is that of Putative multidrug resistance protein MdtD from Escherichia coli (strain SE11).